The chain runs to 298 residues: Lipoyl synthase (298 aa).

[4Fe-4S] cluster contacts are provided by cysteine 40, cysteine 45, cysteine 51, cysteine 67, cysteine 71, cysteine 74, and serine 280. A Radical SAM core domain is found at 53-269 (AVRRTATFMI…KEIAMQKGFS (217 aa)).

Belongs to the radical SAM superfamily. Lipoyl synthase family. It depends on [4Fe-4S] cluster as a cofactor.

It localises to the cytoplasm. The catalysed reaction is [[Fe-S] cluster scaffold protein carrying a second [4Fe-4S](2+) cluster] + N(6)-octanoyl-L-lysyl-[protein] + 2 oxidized [2Fe-2S]-[ferredoxin] + 2 S-adenosyl-L-methionine + 4 H(+) = [[Fe-S] cluster scaffold protein] + N(6)-[(R)-dihydrolipoyl]-L-lysyl-[protein] + 4 Fe(3+) + 2 hydrogen sulfide + 2 5'-deoxyadenosine + 2 L-methionine + 2 reduced [2Fe-2S]-[ferredoxin]. It functions in the pathway protein modification; protein lipoylation via endogenous pathway; protein N(6)-(lipoyl)lysine from octanoyl-[acyl-carrier-protein]. Functionally, catalyzes the radical-mediated insertion of two sulfur atoms into the C-6 and C-8 positions of the octanoyl moiety bound to the lipoyl domains of lipoate-dependent enzymes, thereby converting the octanoylated domains into lipoylated derivatives. This Bacillus subtilis (strain 168) protein is Lipoyl synthase.